The chain runs to 77 residues: NAD(P)H-quinone oxidoreductase subunit L (77 aa).

The next 2 helical transmembrane spans lie at leucine 10–glycine 30 and leucine 48–leucine 68.

The protein belongs to the complex I NdhL subunit family. As to quaternary structure, NDH-1 can be composed of about 15 different subunits; different subcomplexes with different compositions have been identified which probably have different functions.

The protein localises to the cellular thylakoid membrane. It catalyses the reaction a plastoquinone + NADH + (n+1) H(+)(in) = a plastoquinol + NAD(+) + n H(+)(out). The enzyme catalyses a plastoquinone + NADPH + (n+1) H(+)(in) = a plastoquinol + NADP(+) + n H(+)(out). In terms of biological role, NDH-1 shuttles electrons from an unknown electron donor, via FMN and iron-sulfur (Fe-S) centers, to quinones in the respiratory and/or the photosynthetic chain. The immediate electron acceptor for the enzyme in this species is believed to be plastoquinone. Couples the redox reaction to proton translocation, and thus conserves the redox energy in a proton gradient. Cyanobacterial NDH-1 also plays a role in inorganic carbon-concentration. This Picosynechococcus sp. (strain ATCC 27264 / PCC 7002 / PR-6) (Agmenellum quadruplicatum) protein is NAD(P)H-quinone oxidoreductase subunit L.